The chain runs to 433 residues: E3 ubiquitin-protein ligase RGLG5 (433 aa).

Residues 1–61 (MGGSSSKESP…SYNSGRQTPK (61 aa)) form a disordered region. Gly2 carries the N-myristoyl glycine lipid modification. Residues 22–39 (SVSGSSSYSSAWDQSSYY) are compositionally biased toward low complexity. The span at 40-61 (QTPNHPSASPVSSYNSGRQTPK) shows a compositional bias: polar residues. In terms of domain architecture, VWFA spans 93–313 (NLIVGIDVTK…KEAEFALSAL (221 aa)). Positions 340–383 (IALPPPTYATQSMRNSPRTSRSTSFQNKPYDNGVSSTPPSTTHN) are disordered. A compositionally biased stretch (polar residues) spans 347 to 383 (YATQSMRNSPRTSRSTSFQNKPYDNGVSSTPPSTTHN). Residues 390–423 (CPVCLVSAKNMAFNCGHQTCAGCGEDLHVCPICR) form an RING-type zinc finger.

In terms of assembly, interacts with PP2CA. In terms of processing, N-myristoylated.

The protein resides in the cell membrane. It catalyses the reaction S-ubiquitinyl-[E2 ubiquitin-conjugating enzyme]-L-cysteine + [acceptor protein]-L-lysine = [E2 ubiquitin-conjugating enzyme]-L-cysteine + N(6)-ubiquitinyl-[acceptor protein]-L-lysine.. Its function is as follows. Together with RGLG1, mediates the ubiquitination and subsequent proteasomal degradation of the target protein PP2CA. Functions as a positive regulator of abscisic acid (ABA) signaling through ABA-dependent degradation of PP2CA, a major inhibitor of ABA signaling. The polypeptide is E3 ubiquitin-protein ligase RGLG5 (Arabidopsis thaliana (Mouse-ear cress)).